The sequence spans 354 residues: MDDNKKKALAAALGQIERQFGKGAVMRMGDHDRQAIPAISTGSLGLDIALGIGGLPKGRIVEIYGPESSGKTTLTLSVIAQAQKMGATCAFVDAEHALDPEYAGKLGVNVDDLLVSQPDTGEQALEITDMLVRSNAIDVIVVDSVAALVPKAEIEGEMGDMHVGLQARLMSQALRKITGNIKNANCLVIFINQIRMKIGVMFGSPETTTGGNALKFYASVRLDIRRTGAVKEGDEVVGSETRVKVVKNKVAPPFRQAEFQILYGKGIYLNGEIVDLAVLHGFVEKSGAWYSYQGSKIGQGKANSAKFLADNPEICKALEKQIRDKLLTPGVDTKAVGSREAAVADDMAEADADI.

65-72 lines the ATP pocket; the sequence is GPESSGKT.

Belongs to the RecA family.

It is found in the cytoplasm. Its function is as follows. Can catalyze the hydrolysis of ATP in the presence of single-stranded DNA, the ATP-dependent uptake of single-stranded DNA by duplex DNA, and the ATP-dependent hybridization of homologous single-stranded DNAs. It interacts with LexA causing its activation and leading to its autocatalytic cleavage. The chain is Protein RecA from Pseudomonas savastanoi pv. phaseolicola (strain 1448A / Race 6) (Pseudomonas syringae pv. phaseolicola (strain 1448A / Race 6)).